An 887-amino-acid chain; its full sequence is Exocyst complex component SEC3A (887 aa).

2 coiled-coil regions span residues 221-248 and 281-301; these read IGEAEAFSERLKRELQALEAANVHAILE and LRHMREDIESIETRNNKLEMQ. A disordered region spans residues 542-581; the sequence is GAGNDKKSQSNNDDGNDDDDLGIMDIDETDKKPGKNSPDL. Residues 555 to 569 are compositionally biased toward acidic residues; the sequence is DGNDDDDLGIMDIDE.

It belongs to the SEC3 family. As to quaternary structure, the exocyst complex is composed of SEC3, SEC5, SEC6, SEC8, SEC10, EXO70A1 and EXO84B. Interacts with EXO70A1, SEC5A and ICR1, but not with ICR2. Binds to EXO70H1. Binds directly to B1L. Widely expressed. Preferentially expressed in tissues containing dividing and expanding cells, such as the shoot apical meristem, root tip, lateral root primordia and developing embryos.

Its subcellular location is the cytoplasm. The protein resides in the cytosol. The protein localises to the cell membrane. It localises to the cytoskeleton. It is found in the phragmoplast. Its subcellular location is the secreted. The protein resides in the extracellular exosome. In terms of biological role, component of the exocyst complex involved in the docking of exocytic vesicles with fusion sites on the plasma membrane during regulated or polarized secretion. Involved in polarized cell growth and organ morphogenesis. During cytokinesis, involved in cell plate initiation, cell plate maturation and formation of new primary cell wall. During cytokinesis, involved in cell plate initiation, cell plate maturation and formation of new primary cell wall. The chain is Exocyst complex component SEC3A from Arabidopsis thaliana (Mouse-ear cress).